A 268-amino-acid polypeptide reads, in one-letter code: Glucosamine-6-phosphate deaminase (268 aa).

Asp72 serves as the catalytic Proton acceptor; for enolization step. The active-site For ring-opening step is Asp141. The active-site Proton acceptor; for ring-opening step is the His143. Residue Glu148 is the For ring-opening step of the active site.

Belongs to the glucosamine/galactosamine-6-phosphate isomerase family. NagB subfamily. Homohexamer.

The catalysed reaction is alpha-D-glucosamine 6-phosphate + H2O = beta-D-fructose 6-phosphate + NH4(+). It functions in the pathway amino-sugar metabolism; N-acetylneuraminate degradation; D-fructose 6-phosphate from N-acetylneuraminate: step 5/5. With respect to regulation, allosterically activated by N-acetylglucosamine 6-phosphate (GlcNAc6P). Catalyzes the reversible isomerization-deamination of glucosamine 6-phosphate (GlcN6P) to form fructose 6-phosphate (Fru6P) and ammonium ion. In Histophilus somni (strain 2336) (Haemophilus somnus), this protein is Glucosamine-6-phosphate deaminase.